The sequence spans 510 residues: NAD(P)H-quinone oxidoreductase subunit 2 B, chloroplastic (510 aa).

13 consecutive transmembrane segments (helical) span residues 24-44, 57-77, 99-119, 124-144, 149-169, 183-203, 227-247, 295-315, 323-343, 354-374, 395-415, 428-448, and 484-504; these read LLLFDGSFIFPECILIFGLIL, IPWFYFISSTSLVMSITALLF, IFQFLILLCSTLCIPLSVEYI, MAITEFLLFVLTATLGGMFLC, LITIFVAPECFSLCSYLLSGY, YLLMGGASSSILVHGFSWLYG, PGILIALLFITVGIGFKLSLA, WHLLLEILAILSMILGNLIAI, MLAYSSIGQIGYVIIGIIVGD, YMLFYISMNLGTFACIVLFGL, ALSLALCLLSLGGLPPLAGFF, GLYFLVSIGLLTSVISIYYYL, and MIVCVIASTIPGISMNPIIAI.

It belongs to the complex I subunit 2 family. As to quaternary structure, NDH is composed of at least 16 different subunits, 5 of which are encoded in the nucleus.

It localises to the plastid. Its subcellular location is the chloroplast thylakoid membrane. It catalyses the reaction a plastoquinone + NADH + (n+1) H(+)(in) = a plastoquinol + NAD(+) + n H(+)(out). The enzyme catalyses a plastoquinone + NADPH + (n+1) H(+)(in) = a plastoquinol + NADP(+) + n H(+)(out). In terms of biological role, NDH shuttles electrons from NAD(P)H:plastoquinone, via FMN and iron-sulfur (Fe-S) centers, to quinones in the photosynthetic chain and possibly in a chloroplast respiratory chain. The immediate electron acceptor for the enzyme in this species is believed to be plastoquinone. Couples the redox reaction to proton translocation, and thus conserves the redox energy in a proton gradient. The protein is NAD(P)H-quinone oxidoreductase subunit 2 B, chloroplastic of Eucalyptus globulus subsp. globulus (Tasmanian blue gum).